The primary structure comprises 382 residues: 26S proteasome non-ATPase regulatory subunit 6 (382 aa).

The PCI domain maps to 186-354; the sequence is QFKEASDLYL…GVIETTRSDA (169 aa).

The protein belongs to the proteasome subunit S10 family.

Acts as a regulatory subunit of the 26S proteasome which is involved in the ATP-dependent degradation of ubiquitinated proteins. The chain is 26S proteasome non-ATPase regulatory subunit 6 (psmD6) from Dictyostelium discoideum (Social amoeba).